Reading from the N-terminus, the 345-residue chain is NADPH dehydrogenase (345 aa).

Residue 23–26 (SPMC) coordinates FMN. A substrate-binding site is contributed by tyrosine 28. FMN-binding residues include alanine 60 and glutamine 102. 164–167 (HGAH) lines the substrate pocket. Residues arginine 215 and 307–308 (GR) contribute to the FMN site.

It belongs to the NADH:flavin oxidoreductase/NADH oxidase family. NamA subfamily. Homotetramer. FMN serves as cofactor.

The enzyme catalyses A + NADPH + H(+) = AH2 + NADP(+). Catalyzes the reduction of the double bond of an array of alpha,beta-unsaturated aldehydes and ketones. It also reduces the nitro group of nitroester and nitroaromatic compounds. It could have a role in detoxification processes. This is NADPH dehydrogenase from Bacillus cereus (strain B4264).